Reading from the N-terminus, the 312-residue chain is UDP-N-acetylenolpyruvoylglucosamine reductase (312 aa).

An FAD-binding PCMH-type domain is found at 37–205 (VGGPADALVV…VCAEFALCPG (169 aa)). R185 is a catalytic residue. The Proton donor role is filled by S234. The active site involves E304.

The protein belongs to the MurB family. FAD is required as a cofactor.

The protein localises to the cytoplasm. The enzyme catalyses UDP-N-acetyl-alpha-D-muramate + NADP(+) = UDP-N-acetyl-3-O-(1-carboxyvinyl)-alpha-D-glucosamine + NADPH + H(+). It participates in cell wall biogenesis; peptidoglycan biosynthesis. Its function is as follows. Cell wall formation. This chain is UDP-N-acetylenolpyruvoylglucosamine reductase, found in Syntrophus aciditrophicus (strain SB).